The primary structure comprises 155 residues: MAEEILGNIAEEAHAALLASAGDEATKKSGAIRLPIEDSLDGDFGSRGTAYTDLSTTTSAGTSGQLVERTGGISFGRLLSVAGSCSINLLLPFLNGLMLGFGELLAHELSWKFSWFDKERNRGYRIYPEVRKAAELQERERQRALSRAAGPDGFL.

It belongs to the MIM1 family.

The protein resides in the mitochondrion outer membrane. Functionally, required for the assembly of the TOM (translocase of outer membrane) receptor complex, which is responsible for the recognition and translocation of cytosolically synthesized mitochondrial preproteins. The protein is Mitochondrial import protein 1 of Eremothecium gossypii (strain ATCC 10895 / CBS 109.51 / FGSC 9923 / NRRL Y-1056) (Yeast).